A 372-amino-acid polypeptide reads, in one-letter code: Sulfate/thiosulfate import ATP-binding protein CysA (372 aa).

Residues Ile3–Leu237 enclose the ABC transporter domain. Gly35 to Thr42 contributes to the ATP binding site.

Belongs to the ABC transporter superfamily. Sulfate/tungstate importer (TC 3.A.1.6) family. As to quaternary structure, the complex is composed of two ATP-binding proteins (CysA), two transmembrane proteins (CysT and CysW) and a solute-binding protein (CysP).

The protein resides in the cell inner membrane. It carries out the reaction sulfate(out) + ATP + H2O = sulfate(in) + ADP + phosphate + H(+). The catalysed reaction is thiosulfate(out) + ATP + H2O = thiosulfate(in) + ADP + phosphate + H(+). In terms of biological role, part of the ABC transporter complex CysAWTP involved in sulfate/thiosulfate import. Responsible for energy coupling to the transport system. The chain is Sulfate/thiosulfate import ATP-binding protein CysA from Ralstonia nicotianae (strain ATCC BAA-1114 / GMI1000) (Ralstonia solanacearum).